The sequence spans 599 residues: Elongation factor 4 (599 aa).

The region spanning 5–187 is the tr-type G domain; it reads SHIRNFSIIA…RLVAVIPPPT (183 aa). GTP is bound by residues 17 to 22 and 134 to 137; these read DHGKST and NKMD.

This sequence belongs to the TRAFAC class translation factor GTPase superfamily. Classic translation factor GTPase family. LepA subfamily.

The protein localises to the cell inner membrane. The enzyme catalyses GTP + H2O = GDP + phosphate + H(+). Required for accurate and efficient protein synthesis under certain stress conditions. May act as a fidelity factor of the translation reaction, by catalyzing a one-codon backward translocation of tRNAs on improperly translocated ribosomes. Back-translocation proceeds from a post-translocation (POST) complex to a pre-translocation (PRE) complex, thus giving elongation factor G a second chance to translocate the tRNAs correctly. Binds to ribosomes in a GTP-dependent manner. This Stutzerimonas stutzeri (strain A1501) (Pseudomonas stutzeri) protein is Elongation factor 4.